The sequence spans 138 residues: Venom allergen 2 (138 aa).

An N-terminal signal peptide occupies residues 1–19 (MKSFVLATCLLGFAQIIYA).

The protein belongs to the ant venom allergen 2/4 family. As to quaternary structure, homodimer; disulfide-linked. In terms of tissue distribution, expressed by the venom gland.

The protein localises to the secreted. This chain is Venom allergen 2, found in Solenopsis saevissima (Fire ant).